We begin with the raw amino-acid sequence, 450 residues long: UDP-N-acetylmuramoylalanine--D-glutamate ligase (450 aa).

Gly-115–Thr-121 is a binding site for ATP.

It belongs to the MurCDEF family.

It localises to the cytoplasm. The catalysed reaction is UDP-N-acetyl-alpha-D-muramoyl-L-alanine + D-glutamate + ATP = UDP-N-acetyl-alpha-D-muramoyl-L-alanyl-D-glutamate + ADP + phosphate + H(+). It functions in the pathway cell wall biogenesis; peptidoglycan biosynthesis. Cell wall formation. Catalyzes the addition of glutamate to the nucleotide precursor UDP-N-acetylmuramoyl-L-alanine (UMA). The sequence is that of UDP-N-acetylmuramoylalanine--D-glutamate ligase from Syntrophotalea carbinolica (strain DSM 2380 / NBRC 103641 / GraBd1) (Pelobacter carbinolicus).